A 970-amino-acid chain; its full sequence is Polycystin-2 (970 aa).

The span at 1-11 (MVNSSRVQPQQ) shows a compositional bias: polar residues. The disordered stretch occupies residues 1-182 (MVNSSRVQPQ…GDPLHRHLPL (182 aa)). Residues 1-221 (MVNSSRVQPQ…STDREKYLKS (221 aa)) are Cytoplasmic-facing. A compositionally biased stretch (low complexity) spans 25–45 (GPGRLMAGGAIAGAGLAAPGG). Over residues 47-60 (REQRGLEIEMERIR) the composition is skewed to basic and acidic residues. Positions 62–83 (AAARDPPAGASASPSPPLSSCS) are enriched in low complexity. Residues S76 and S80 each carry the phosphoserine modification. Residues 95-109 (EAEEEEEEEEVEGEE) show a composition bias toward acidic residues. Over residues 125-138 (RRSASSSAVSSAGA) the composition is skewed to low complexity. At R139 the chain carries Omega-N-methylarginine. A compositionally biased stretch (gly residues) spans 139-148 (RGRGLGGYHG). A helical membrane pass occupies residues 222-243 (VLRELATYLLFLIVLCILTYGM). Over 244–470 (MSSSVYYYTR…PVKLIRYVTT (227 aa)) the chain is Extracellular. N301, N307, and N330 each carry an N-linked (GlcNAc...) asparagine glycan. Residues C333 and C346 are joined by a disulfide bond. Residues N364 and N377 are each glycosylated (N-linked (GlcNAc...) asparagine). A helical transmembrane segment spans residues 471–491 (FDFFLAACEIIFCLFILYYVV). Residues 492 to 507 (EEILEIRIHKLHYFRS) lie on the Cytoplasmic side of the membrane. A helical transmembrane segment spans residues 508-528 (FWNCLDVVIIVLSVVAIGINI). The Extracellular segment spans residues 529–554 (YRTSNVEALLQFLEDQNTFPNFENLA). A helical membrane pass occupies residues 555–575 (YWQTQFNNIAAVIVFFVWIKL). Position 559 (Q559) interacts with cholesterol. At 576-599 (FKFINFNRTMSQLSTTMSRCAKDL) the chain is on the cytoplasmic side. Residues 600–621 (FGFAIMFFIIFLAYAQLAYLVF) form a helical membrane-spanning segment. The Extracellular portion of the chain corresponds to 622 to 633 (GTQVDDFSTFQE). The pore-forming intramembrane region spans 634–648 (CIFTQFRIILGDINF). L643 contacts Ca(2+). The Selectivity filter signature appears at 643-645 (LGD). Topologically, residues 649-656 (AEIEEANR) are extracellular. Residues 657 to 677 (VLGPIYFTTFVFFMFFILLNM) form a helical membrane-spanning segment. Over 678–970 (FLAIINDTYS…GGNGSANIHV (293 aa)) the chain is Cytoplasmic. Residues 750–785 (KGHTDAEIEAIFTKYDQDGDQELTEHEHQQMRDDLE) enclose the EF-hand domain. Residues D765, D767, D769, E771, and E776 each contribute to the Ca(2+) site. The interval 766 to 833 (QDGDQELTEH…HSSRRRGSIS (68 aa)) is disordered. A compositionally biased stretch (basic and acidic residues) spans 772–797 (LTEHEHQQMRDDLEKEREDLDLDHSS). Low complexity predominate over residues 798 to 809 (LPRPMSSRSFPR). Phosphoserine occurs at positions 803, 810, 814, and 831. The tract at residues 805–824 (RSFPRSLDDSEEEDDDDSGH) is linker. The segment at 812–823 (DDSEEEDDDDSG) is important for interaction with PACS1 and PACS2. A coiled-coil region spans residues 835–874 (GVSYEEFQVLVRRVDRMEHSIGSIVSKIDAVIVKLEIMER). A disordered region spans residues 921–970 (DDAASQISHGLGTPLGLNGQPRPRSSRPSSSQSTEGMEGGGGNGSANIHV). Low complexity predominate over residues 940–956 (QPRPRSSRPSSSQSTEG).

Belongs to the polycystin family. As to quaternary structure, homotetramer. Component of the heterotetrameric polycystin channel complex with PKD1; the tetramer contains one PKD1 chain and three PKD2 chains. Isoform 1 interacts with PKD1 while isoform 3 does not. Interacts with PKD1L1; probably forms a Ca(2+) channel. Interacts with CD2AP. Interacts with HAX1. Interacts with NEK8. Part of a complex containing AKAP5, ADCY5, ADCY6 and PDE4C. Interacts (via C-terminus) with TRPV4 (via C-terminus). Interacts (via C-terminal acidic region) with PACS1 and PACS2; these interactions retain the protein in the endoplasmic reticulum and prevent trafficking to the cell membrane. Interacts with TMEM33. Form a heterotetramer with TRPC1 with a 2:2 stoichiometry; has distinct channel properties separate from PKD2 or TRPC1 homomers alone. Interacts with TMEM120A; TMEM120A inhibits PKD2 channel activity through the physical association of PKD2 with TMEM120A. Interacts (via N-terminus) with RYR2; regulates RYR2 channel activity. N-glycosylated. The four subunits in a tetramer probably differ in the extent of glycosylation; simultaneous glycosylation of all experimentally validated sites would probably create steric hindrance. In terms of processing, phosphorylated. Phosphorylation is important for protein function; a mutant that lacks the N-terminal phosphorylation sites cannot complement a zebrafish pkd2-deficient mutant. PKD-mediated phosphorylation at the C-terminus regulates its function in the release of Ca(2+) stores from the endoplasmic reticulum. Phosphorylation at Ser-814 regulates PKD2 trafficking. Phosphorylation at Ser-76 is required for PKD2 trafficking to or retention at the lateral plasma membrane. Phosphorylation at Ser-803, Ser-814 and Ser-831 regulates PKD2 channel activity. Post-translationally, sumoylated by SUMO1; sumoylation regulates PKD2 membrane recycling and is necessary for intravascular pressure-induced arterial contractility. Expressed in mesenchymally derived structures in the developing embryo at day 12.5. In adult, mostly expressed in kidney.

The protein localises to the cell projection. It localises to the cilium membrane. The protein resides in the endoplasmic reticulum membrane. It is found in the cell membrane. Its subcellular location is the basolateral cell membrane. The protein localises to the cytoplasmic vesicle membrane. It localises to the golgi apparatus. The protein resides in the vesicle. It is found in the secreted. Its subcellular location is the extracellular exosome. It catalyses the reaction K(+)(in) = K(+)(out). The enzyme catalyses Na(+)(in) = Na(+)(out). The catalysed reaction is Ca(2+)(in) = Ca(2+)(out). Channel activity is regulated by phosphorylation. Channel activity is regulated by intracellular Ca(2+). At the endoplasmic reticulum membrane (ER), TMEM33 enhances its channel activity. TMEM120A inhibits the channel activity of PKD2, and mediates mechanosensitivity of the PKD2-TMEM120A channel complex. PKD1/PKD2 complex on the plasma membrane is activated by PKD1 N-terminus. Functionally, forms a nonselective cation channel. Can function as a homotetrameric ion channel or can form heteromer with PKD1. Displays distinct function depending on its subcellular localization and regulation by its binding partners. Functions as a cation channel, with a preference for monovalent cations over divalent cations that allows K(+), Na(+) and Ca(2+) influx, with low selectivity for Ca(2+). Involved in fluid-flow mechanosensation in the primary cilium in renal epithelium. In the endoplasmic reticulum, likely functions as a K(+) channel to facilitate Ca(2+) release. The heterotetrameric PKD1/PKD2 channel has higher Ca(2+) permeability than homomeric PKD2 channel and acts as a primarily Ca(2+)-permeable channel. Interacts with and acts as a regulator of a number of other channels, such as TRPV4, TRPC1, IP3R, RYR2, ultimately further affecting intracellular signaling, to modulate intracellular Ca(2+) signaling. Together with TRPV4, forms mechano- and thermosensitive channels in cilium. In cardiomyocytes, PKD2 modulates Ca(2+) release from stimulated RYR2 receptors through direct association. Also involved in left-right axis specification via its role in sensing nodal flow; forms a complex with PKD1L1 in cilia to facilitate flow detection in left-right patterning. Acts as a regulator of cilium length together with PKD1. Mediates systemic blood pressure and contributes to the myogenic response in cerebral arteries though vasoconstriction. This Bos taurus (Bovine) protein is Polycystin-2.